Here is a 333-residue protein sequence, read N- to C-terminus: Electron transfer flavoprotein subunit alpha, mitochondrial (333 aa).

The N-terminal 19 residues, 1 to 19 (MFRAAAPGQLRRAASLLRF), are a transit peptide targeting the mitochondrion. A domain I region spans residues 20–204 (QSTLVIAEHA…EISEWLDQKL (185 aa)). K59 is modified (N6-acetyllysine; alternate). K59 is subject to N6-succinyllysine; alternate. An N6-acetyllysine modification is found at K62. K69 is modified (N6-acetyllysine; alternate). K69 bears the N6-succinyllysine; alternate mark. An N6-acetyllysine modification is found at K75. The residue at position 93 (T93) is a Phosphothreonine. N6-acetyllysine occurs at positions 101 and 139. A Phosphoserine modification is found at S140. Residue K158 is modified to N6-acetyllysine; alternate. K158 is modified (N6-succinyllysine; alternate). K164 bears the N6-acetyllysine mark. K187 is subject to N6-succinyllysine. N6-acetyllysine; alternate is present on K203. At K203 the chain carries N6-succinyllysine; alternate. A domain II region spans residues 205 to 333 (TKSDRPELTG…PEMTEILKKK (129 aa)). N6-succinyllysine is present on K216. FAD is bound at residue R223. K226 and K232 each carry N6-acetyllysine; alternate. 2 positions are modified to N6-succinyllysine; alternate: K226 and K232. Residues S248, 263–266 (VGQT), 281–286 (SGAIQH), and N300 each bind FAD. Position 301 is an N6-succinyllysine (K301). 318–319 (DL) contributes to the FAD binding site.

The protein belongs to the ETF alpha-subunit/FixB family. In terms of assembly, heterodimer composed of ETFA and ETFB. Identified in a complex that contains ETFA, ETFB and ETFRF1. Interaction with ETFRF1 promotes dissociation of the bound FAD and loss of electron transfer activity. Interacts with TASOR. FAD serves as cofactor.

The protein localises to the mitochondrion matrix. Its function is as follows. Heterodimeric electron transfer flavoprotein that accepts electrons from several mitochondrial dehydrogenases, including acyl-CoA dehydrogenases, glutaryl-CoA and sarcosine dehydrogenase. It transfers the electrons to the main mitochondrial respiratory chain via ETF-ubiquinone oxidoreductase (ETF dehydrogenase). Required for normal mitochondrial fatty acid oxidation and normal amino acid metabolism. The chain is Electron transfer flavoprotein subunit alpha, mitochondrial (ETFA) from Pongo abelii (Sumatran orangutan).